Consider the following 135-residue polypeptide: Retinol-binding protein 1 (135 aa).

The tract at residues 22–32 (RALDVNVALRK) is important for interaction with STRA6. Positions 41, 63, and 109 each coordinate all-trans-retinol.

This sequence belongs to the calycin superfamily. Fatty-acid binding protein (FABP) family. In terms of assembly, interacts (only as retinol-free apoprotein) with STRA6.

It localises to the cytoplasm. It is found in the lipid droplet. Functionally, cytoplasmic retinol-binding protein. Accepts retinol from the transport protein STRA6, and thereby contributes to retinol uptake, storage and retinoid homeostasis. The chain is Retinol-binding protein 1 (RBP1) from Bos taurus (Bovine).